We begin with the raw amino-acid sequence, 452 residues long: D-inositol 3-phosphate glycosyltransferase (452 aa).

Histidine 25 is a binding site for 1D-myo-inositol 3-phosphate. Residues glutamine 31–proline 32 and glycine 39 each bind UDP-N-acetyl-alpha-D-glucosamine. 1D-myo-inositol 3-phosphate-binding positions include aspartate 36–asparagine 41, lysine 94, tyrosine 127, threonine 151, and arginine 171. UDP-N-acetyl-alpha-D-glucosamine is bound by residues arginine 245, lysine 250, and glutamine 309. Mg(2+)-binding residues include tyrosine 318, arginine 319, and serine 321. The UDP-N-acetyl-alpha-D-glucosamine site is built by glutamate 331 and glutamate 339. Threonine 345 provides a ligand contact to Mg(2+).

This sequence belongs to the glycosyltransferase group 1 family. MshA subfamily. Homodimer.

The catalysed reaction is 1D-myo-inositol 3-phosphate + UDP-N-acetyl-alpha-D-glucosamine = 1D-myo-inositol 2-acetamido-2-deoxy-alpha-D-glucopyranoside 3-phosphate + UDP + H(+). Catalyzes the transfer of a N-acetyl-glucosamine moiety to 1D-myo-inositol 3-phosphate to produce 1D-myo-inositol 2-acetamido-2-deoxy-glucopyranoside 3-phosphate in the mycothiol biosynthesis pathway. The chain is D-inositol 3-phosphate glycosyltransferase from Rhodococcus jostii (strain RHA1).